A 142-amino-acid chain; its full sequence is MKPPIALACLCLLVPLAGGNLVQFGVMIERMTGKPALQYNDYGCYCGVGGSHWPVDETDWCCHAHDCCYGRLEKLGCDPKLEKYLFSITRDNIFCAGRTACQRHTCECDKRAALCFRHNLNTYNRKYAHYPNKLCTGPTPPC.

Residues 1–19 (MKPPIALACLCLLVPLAGG) form the signal peptide. Asp41, Gly43, Tyr45, Gly47, and Gly49 together coordinate Ca(2+). 7 disulfides stabilise this stretch: Cys44/Cys135, Cys46/Cys62, Cys61/Cys115, Cys67/Cys142, Cys68/Cys108, Cys77/Cys101, and Cys95/Cys106. Residue His65 is part of the active site. Asp66 contacts Ca(2+). Residue Asp109 is part of the active site. 2 residues coordinate Ca(2+): Tyr130 and Asn132.

It belongs to the phospholipase A2 family. The cofactor is Ca(2+). As to expression, highly expressed in skin and uterus, and at lower levels in various other tissues. Expressed in hair follicles, specifically localized in companion cells of the outer root sheath and cuticular cells of the inner root sheath in hair follicles during anagen. Expressed in white and brown adipose tissue.

The protein resides in the secreted. The protein localises to the cytoplasm. The catalysed reaction is a 1,2-diacyl-sn-glycero-3-phosphoethanolamine + H2O = a 1-acyl-sn-glycero-3-phosphoethanolamine + a fatty acid + H(+). The enzyme catalyses 1-hexadecanoyl-2-(9Z-octadecenoyl)-sn-glycero-3-phosphoethanolamine + H2O = 1-hexadecanoyl-sn-glycero-3-phosphoethanolamine + (9Z)-octadecenoate + H(+). It catalyses the reaction 1-hexadecanoyl-2-(9Z,12Z-octadecadienoyl)-sn-glycero-3-phosphoethanolamine + H2O = 1-hexadecanoyl-sn-glycero-3-phosphoethanolamine + (9Z,12Z)-octadecadienoate + H(+). It carries out the reaction 1-hexadecanoyl-2-(5Z,8Z,11Z,14Z-eicosatetraenoyl)-sn-glycero-3-phosphoethanolamine + H2O = 1-hexadecanoyl-sn-glycero-3-phosphoethanolamine + (5Z,8Z,11Z,14Z)-eicosatetraenoate + H(+). The catalysed reaction is 1,2-dihexadecanoyl-sn-glycero-3-phospho-(1'-sn-glycerol) + H2O = 1-hexadecanoyl-sn-glycero-3-phospho-(1'-sn-glycerol) + hexadecanoate + H(+). The enzyme catalyses 1-hexadecanoyl-2-(9Z-octadecenoyl)-sn-glycero-3-phosphoglycerol + H2O = 1-hexadecanoyl-sn-glycero-3-phosphoglycerol + (9Z)-octadecenoate + H(+). It catalyses the reaction a 1,2-diacyl-sn-glycero-3-phosphocholine + H2O = a 1-acyl-sn-glycero-3-phosphocholine + a fatty acid + H(+). It carries out the reaction 1,2-dihexadecanoyl-sn-glycero-3-phosphocholine + H2O = 1-hexadecanoyl-sn-glycero-3-phosphocholine + hexadecanoate + H(+). The catalysed reaction is 1-hexadecanoyl-2-(9Z-octadecenoyl)-sn-glycero-3-phosphocholine + H2O = 1-hexadecanoyl-sn-glycero-3-phosphocholine + (9Z)-octadecenoate + H(+). The enzyme catalyses 1-hexadecanoyl-2-(9Z,12Z-octadecadienoyl)-sn-glycero-3-phosphocholine + H2O = (9Z,12Z)-octadecadienoate + 1-hexadecanoyl-sn-glycero-3-phosphocholine + H(+). It catalyses the reaction 1-hexadecanoyl-2-(4Z,7Z,10Z,13Z,16Z,19Z-docosahexaenoyl)-sn-glycero-3-phosphocholine + H2O = (4Z,7Z,10Z,13Z,16Z,19Z)-docosahexaenoate + 1-hexadecanoyl-sn-glycero-3-phosphocholine + H(+). Secretory calcium-dependent phospholipase A2 that primarily targets extracellular phospholipids. Hydrolyzes the ester bond of the fatty acyl group attached at sn-2 position of phospholipids (phospholipase A2 activity), releasing various unsaturated fatty acids including oleoate, linoleoate, arachidonate, docosahexaenoate and lysophosphatidylethanolamines in preference to lysophosphatidylcholines. In response to high-fat diet, hydrolyzes minor lipoprotein phospholipids including phosphatidylserines, phosphatidylinositols and phosphatidylglycerols, altering lipoprotein composition and fat storage in adipose tissue and liver. May act in an autocrine and paracrine manner. Contributes to lipid remodeling of cellular membranes and generation of lipid mediators involved in pathogen clearance. Cleaves sn-2 fatty acyl chains of phosphatidylglycerols and phosphatidylethanolamines, which are major components of membrane phospholipids in bacteria. Acts as a hair follicle phospholipase A2. Selectively releases lysophosphatidylethanolamines (LPE) and various unsaturated fatty acids in skin to regulate hair follicle homeostasis. May regulate the inflammatory response by releasing arachidonate, a precursor of prostaglandins and leukotrienes. Upon allergen exposure, may participate in allergic inflammatory response by enhancing leukotriene C4 synthesis and degranulation in mast cells. The chain is Group IIE secretory phospholipase A2 (Pla2g2e) from Mus musculus (Mouse).